The primary structure comprises 1073 residues: PX domain-containing protein LEC1 (1073 aa).

Positions 218–228 (CTESVDNDKSS) are enriched in basic and acidic residues. The tract at residues 218–240 (CTESVDNDKSSKSTPTSSPKSHA) is disordered. Residues 229-238 (KSTPTSSPKS) are compositionally biased toward low complexity. Residues 273 to 506 (LFSKLSLGVP…RFFLSGPNLD (234 aa)) form the PX domain. Phosphoserine is present on residues Ser-310 and Ser-451. The interval 431–456 (IKEEDNIDEDEYEEEGEGEESDFDEY) is disordered. Over residues 432 to 453 (KEEDNIDEDEYEEEGEGEESDF) the composition is skewed to acidic residues.

The protein localises to the endoplasmic reticulum membrane. Its subcellular location is the lipid droplet. Its function is as follows. Phosphoinositide-binding protein that plays a role in regulation of ergosterol distribution in the cell. Facilitates ergosterol transport between plasma membrane and lipid droplets. In Saccharomyces cerevisiae (strain ATCC 204508 / S288c) (Baker's yeast), this protein is PX domain-containing protein LEC1.